The following is a 109-amino-acid chain: NAD(P)H-quinone oxidoreductase subunit M (109 aa).

Belongs to the complex I NdhM subunit family. NDH-1 can be composed of about 15 different subunits; different subcomplexes with different compositions have been identified which probably have different functions.

It localises to the cellular thylakoid membrane. It catalyses the reaction a plastoquinone + NADH + (n+1) H(+)(in) = a plastoquinol + NAD(+) + n H(+)(out). The enzyme catalyses a plastoquinone + NADPH + (n+1) H(+)(in) = a plastoquinol + NADP(+) + n H(+)(out). Functionally, NDH-1 shuttles electrons from an unknown electron donor, via FMN and iron-sulfur (Fe-S) centers, to quinones in the respiratory and/or the photosynthetic chain. The immediate electron acceptor for the enzyme in this species is believed to be plastoquinone. Couples the redox reaction to proton translocation, and thus conserves the redox energy in a proton gradient. Cyanobacterial NDH-1 also plays a role in inorganic carbon-concentration. This is NAD(P)H-quinone oxidoreductase subunit M from Microcystis aeruginosa (strain NIES-843 / IAM M-2473).